The chain runs to 139 residues: ATP synthase epsilon chain (139 aa).

The protein belongs to the ATPase epsilon chain family. F-type ATPases have 2 components, CF(1) - the catalytic core - and CF(0) - the membrane proton channel. CF(1) has five subunits: alpha(3), beta(3), gamma(1), delta(1), epsilon(1). CF(0) has three main subunits: a, b and c.

Its subcellular location is the cell inner membrane. Its function is as follows. Produces ATP from ADP in the presence of a proton gradient across the membrane. This is ATP synthase epsilon chain from Pectobacterium carotovorum subsp. carotovorum (strain PC1).